The sequence spans 156 residues: Small ribosomal subunit protein uS7 (156 aa).

It belongs to the universal ribosomal protein uS7 family. Part of the 30S ribosomal subunit. Contacts proteins S9 and S11.

Functionally, one of the primary rRNA binding proteins, it binds directly to 16S rRNA where it nucleates assembly of the head domain of the 30S subunit. Is located at the subunit interface close to the decoding center, probably blocks exit of the E-site tRNA. This chain is Small ribosomal subunit protein uS7, found in Erwinia tasmaniensis (strain DSM 17950 / CFBP 7177 / CIP 109463 / NCPPB 4357 / Et1/99).